Here is a 427-residue protein sequence, read N- to C-terminus: Glutamate-1-semialdehyde 2,1-aminomutase (427 aa).

Lys-265 is subject to N6-(pyridoxal phosphate)lysine.

The protein belongs to the class-III pyridoxal-phosphate-dependent aminotransferase family. HemL subfamily. As to quaternary structure, homodimer. It depends on pyridoxal 5'-phosphate as a cofactor.

The protein localises to the cytoplasm. It catalyses the reaction (S)-4-amino-5-oxopentanoate = 5-aminolevulinate. The protein operates within porphyrin-containing compound metabolism; protoporphyrin-IX biosynthesis; 5-aminolevulinate from L-glutamyl-tRNA(Glu): step 2/2. The polypeptide is Glutamate-1-semialdehyde 2,1-aminomutase (Burkholderia cenocepacia (strain ATCC BAA-245 / DSM 16553 / LMG 16656 / NCTC 13227 / J2315 / CF5610) (Burkholderia cepacia (strain J2315))).